Here is a 315-residue protein sequence, read N- to C-terminus: Zinc finger transcription factor ref-2 (315 aa).

The C2H2-type 1; atypical zinc finger occupies Val-83 to His-112. Residues Lys-124–His-146 form a C2H2-type 2; degenerate zinc finger. 3 consecutive C2H2-type zinc fingers follow at residues Phe-152–His-174, Phe-180–His-204, and Tyr-210–His-234. Residues Ser-225 to Pro-270 form a disordered region. Over residues Val-233 to Ser-249 the composition is skewed to basic and acidic residues. Residues Asp-251 to Pro-270 are compositionally biased toward polar residues.

As to quaternary structure, interacts with TCF transcription factor pop-1; the interaction is direct and facilitates transcriptional activation; transcription may be repressed by beta-catenin/sys-1.

The protein resides in the nucleus. The protein localises to the cytoplasm. Its function is as follows. Transcription factor. Modulates expression of target genes by binding to regulatory elements. Required for normal cell division timing and cell positioning in anterior lineages, acting in a cell-autonomous manner. Required for development, fusion and fate of cells of the ventral epidermis, the Pn.p cells, during larval development; acts in concert with homeobox genes lin-39 and mab-5. Required for the specification of the AIY interneuron. In complex with TCF transcription factor pop-1, positively modulates expression of LIM/homeobox protein ttx-3 in anterior daughter cells of the SMDD/AIY neuron lineage. This Caenorhabditis elegans protein is Zinc finger transcription factor ref-2.